Consider the following 136-residue polypeptide: Histone H3.3 type c (136 aa).

Residues 1 to 30 (MARTKQTARKSTGAKVPRKHLSSKSSFPSK) form a disordered region. Lys5 bears the N6,N6,N6-trimethyllysine; by set1; alternate mark. Lys5 bears the N6,N6-dimethyllysine; by set1; alternate mark. N6-acetyllysine; alternate occurs at positions 5 and 10. N6-methyllysine; by set1; alternate is present on Lys5. At Lys10 the chain carries N6,N6,N6-trimethyllysine; alternate. The residue at position 10 (Lys10) is an N6,N6-dimethyllysine; alternate. Lys10 is modified (N6-methyllysine; alternate). Residue Ser11 is modified to Phosphoserine. Lys15 bears the N6-acetyllysine mark. N6-acetyllysine; alternate occurs at positions 19, 24, and 37. Residues Lys19, Lys24, and Lys37 each carry the N6-methyllysine; alternate modification. Lys37 bears the N6,N6,N6-trimethyllysine; alternate mark. The residue at position 37 (Lys37) is an N6,N6-dimethyllysine; alternate. N6-acetyllysine is present on Lys57. Lys80 carries the N6,N6,N6-trimethyllysine; alternate modification. Lys80 bears the N6,N6-dimethyllysine; alternate mark. Lys80 bears the N6-methyllysine; alternate mark.

It belongs to the histone H3 family. As to quaternary structure, the nucleosome is a histone octamer containing two molecules each of H2A, H2B, H3 and H4 assembled in one H3-H4 heterotetramer and two H2A-H2B heterodimers. The octamer wraps approximately 147 bp of DNA. Acetylation is generally linked to gene activation. Post-translationally, different methylation states of H3K4 mark distinct developmental phases. H3K4me2 is associated with euchromatic regions. H3K4me3 is a mark of active chromatin. set1 is responsible for all mono-, di- and tri-methylation of H3K4. H3K4me facilitates subsequent acetylation of H3 and H4. Methylation at H3K9 is linked to gene repression. In terms of processing, H3S10ph, which is linked to gene activation, prevents methylation at H3K9 but facilitates acetylation of H3 and H4.

It localises to the nucleus. The protein localises to the chromosome. Core component of nucleosome. Nucleosomes wrap and compact DNA into chromatin, limiting DNA accessibility to the cellular machineries which require DNA as a template. Histones thereby play a central role in transcription regulation, DNA repair, DNA replication and chromosomal stability. DNA accessibility is regulated via a complex set of post-translational modifications of histones, also called histone code, and nucleosome remodeling. In Dictyostelium discoideum (Social amoeba), this protein is Histone H3.3 type c (H3c).